A 1184-amino-acid chain; its full sequence is Probable phospholipid-transporting ATPase 12 (1184 aa).

At 1 to 75 (MATVSGRRRK…TTKYTLATFL (75 aa)) the chain is on the cytoplasmic side. A helical transmembrane segment spans residues 76–97 (PKSLFEQFRRVANFYFLVVGIL). The Extracellular portion of the chain corresponds to 98–101 (SFTP). Residues 102–124 (LAPYTAVSAIVPLTFVILATMFK) traverse the membrane as a helical segment. Residues 125–306 (EGVEDWRRKQ…SMIERKMDKI (182 aa)) are Cytoplasmic-facing. Residues 307 to 328 (IYLMFLMVFSLAFFGSVLFGIW) form a helical membrane-spanning segment. Residues 329–364 (TRDDFQNGVMERWYLKPDDSSIFFDPKRAPMAAIYH) lie on the Extracellular side of the membrane. A helical transmembrane segment spans residues 365–382 (FLTALMLNSYFIPISLYV). Topologically, residues 383–921 (SIEIVKVLQS…HGHWCYRRIS (539 aa)) are cytoplasmic. Catalysis depends on Asp-430, which acts as the 4-aspartylphosphate intermediate. Positions 866 and 870 each coordinate Mg(2+). The chain crosses the membrane as a helical span at residues 922–941 (KMICYFFYKNITFGFTLFLY). Over 942–955 (EAYTSFSATPAYND) the chain is Extracellular. A helical membrane pass occupies residues 956-975 (WYLSLYSVFFTSLPVICLGI). The Cytoplasmic segment spans residues 976-1005 (FDQDVSAPFCLKFPVLYQEGVQNLLFSWRR). Residues 1006–1028 (ILSWMFHGFCSAIIIFFLCKTSL) form a helical membrane-spanning segment. Residues 1029 to 1041 (ESQAFNHEGKTAG) are Extracellular-facing. A helical membrane pass occupies residues 1042–1064 (RDILGGTMYTCVVWVVSLQMVLT). Topologically, residues 1065–1070 (ISYFTL) are cytoplasmic. The chain crosses the membrane as a helical span at residues 1071 to 1091 (IQHVVVWGSVVIWYLFLMVYG). Residues 1092–1108 (SLPIRMSTDAYMVFLEA) are Extracellular-facing. Residues 1109–1133 (LAPAPSYWITTLFVVLSTMMPYFIF) traverse the membrane as a helical segment. Over 1134–1184 (SAIQMRFFPMSHGTVQLLRYEDQCSNSGNFEMGRQGSVRPTLVMRSHQPES) the chain is Cytoplasmic.

This sequence belongs to the cation transport ATPase (P-type) (TC 3.A.3) family. Type IV subfamily.

The protein resides in the membrane. The catalysed reaction is ATP + H2O + phospholipidSide 1 = ADP + phosphate + phospholipidSide 2.. Involved in transport of phospholipids. The sequence is that of Probable phospholipid-transporting ATPase 12 from Arabidopsis thaliana (Mouse-ear cress).